A 717-amino-acid polypeptide reads, in one-letter code: MKTSGASNTDELNKSSHSKVSKKSTKSRSKSAKLELTGKNSLSASASSSIASAVSGGVAVGSLPATPTHLNMVTTPTTPTSSLGNYNLFDASFAVAGSGGHGLAGGIAGAEASGNSSRMGHQKSYAGFDPRSIKIFWEQHDQTDVELSQDVCARLAEDASYKVWELINNVKIYSRHSGGVVTYDLVNEVLKDADVPPMLGAMDSDWDRIDYDGSFYFHSDKIFELSAEFQKEVNLCTPDDADFQSICPVEDKHMDQLRQCVQSLVTAALFADSKSQTAAVCHAFQTPLMGSIYRVIVSKMVQLLAFKQQDHLSQRCWRLLRACNYNATANHNACRPEYFNLAEVLVSQLMAPYETIKAPHVDPDPGQTTSIKMEFEEELKVEPDQCHNPETQENPEVMGVEKQEQEPQMFPGESTMEHTIYKLQSEEEELNPQPEAEHLSSYFACPVGNGLVDELCETIGQLASQSGYLHAECLFLIKRRLARFFEGRHVSSERDFRYISRAVRGLIALGEYAFREFIPYIYKLRVEEIPDSLWPDLAPAAIFLGGHDDVYLYEWLEYGCGAALQPFLVHYARAYEKMVTRRYVKAKQPAYRIESVPGVRRLEWSTLAAAMCHGDDPSKALKPKPTLCEAFPDLQSPNLQLNCAGNIRFKFAGCRPVLLKPKVATVPHSEDSPSSAANGGGGGGASSDILIAKRKLFKPLTNVRKWSPISGYHYLRI.

The tract at residues 123-204 (KSYAGFDPRS…VPPMLGAMDS (82 aa)) is sufficient for interaction with Taf9.

The protein belongs to the TAF6 family. As to quaternary structure, component of the Spt-Ada-Gcn5 acetyltransferase (SAGA) complex consisting of wda/Taf5L, Saf6, Taf9, Taf10b, Taf12, Ada1, Spt3, Spt7, Spt20, Sf3b3, Sf3b5, Nipped-A/Tra1, a histone acetyltransferase (HAT) module made up of Gcn5, Ada2b (Isoform B), Ada3 and Sgf29, and a deubiquitinase (DUB) module made up of not/nonstop, Sgf11 and e(y)2 tethered to SAGA by Atxn7; not essential for SAGA complex assembly, histone-modifying activity or chromosomal recruitment. Interacts (via N-terminal histone-fold domain) with Taf9 (via N-terminal histone-fold domain); the interaction is probably direct. Probably forms a histone-like heterooctamer structure with Taf9, Taf12 and Taf10b.

The protein resides in the nucleus. Its subcellular location is the chromosome. Functionally, component of the transcription regulatory complex SAGA, a multiprotein complex that activates transcription by remodeling chromatin and mediating histone acetylation and deubiquitination. The SAGA complex predominantly acetylates histone H3. Involved in SAGA complex coactivator function but not essential for SAGA complex assembly, histone-modifying activity or chromosomal recruitment. Required for oogenesis; involved in transcriptional activation. The sequence is that of SAGA factor-like TAF6 from Drosophila melanogaster (Fruit fly).